We begin with the raw amino-acid sequence, 384 residues long: Formate dehydrogenase, chloroplastic/mitochondrial (384 aa).

Residues 1–29 (MAMRQAAKATIRACSSSSSSGYFARRQFN) constitute a chloroplast and mitochondrion transit peptide. Substrate-binding residues include Ile-128 and Asn-152. NAD(+) is bound by residues 207–208 (RI), Asp-227, 262–266 (PLTEK), Asn-288, Asp-314, and 338–341 (HTSG).

The protein belongs to the D-isomer specific 2-hydroxyacid dehydrogenase family. FDH subfamily. As to quaternary structure, homodimer.

It is found in the mitochondrion. The protein localises to the plastid. Its subcellular location is the chloroplast. The catalysed reaction is formate + NAD(+) = CO2 + NADH. Catalyzes the NAD(+)-dependent oxidation of formate to carbon dioxide. Involved in the cell stress response. The sequence is that of Formate dehydrogenase, chloroplastic/mitochondrial (FDH1) from Arabidopsis thaliana (Mouse-ear cress).